A 181-amino-acid chain; its full sequence is Ribulose bisphosphate carboxylase small subunit, chloroplastic 2 (181 aa).

The N-terminal 57 residues, 1–57, are a transit peptide targeting the chloroplast; the sequence is MASSVISSAAVATRTNVTQAGSMIAPFTGLKSAATFPVSRKQNLDITSIASNGGRVR.

The protein belongs to the RuBisCO small chain family. In terms of assembly, heterohexadecamer of 8 large and 8 small subunits.

The protein localises to the plastid. The protein resides in the chloroplast. Its function is as follows. RuBisCO catalyzes two reactions: the carboxylation of D-ribulose 1,5-bisphosphate, the primary event in carbon dioxide fixation, as well as the oxidative fragmentation of the pentose substrate. Both reactions occur simultaneously and in competition at the same active site. Although the small subunit is not catalytic it is essential for maximal activity. This chain is Ribulose bisphosphate carboxylase small subunit, chloroplastic 2, found in Solanum tuberosum (Potato).